An 854-amino-acid chain; its full sequence is MIPIPRMPLVLLLLLLILGSAKAQVNPAICRYPLGMSGGHIPDEDITASSQWSESTAAKYGRLDSEEGDGAWCPEIPVQPDDLKEFLQIDLRTLHFITLVGTQGRHAGGHGIEFAPMYKINYSRDGSRWISWRNRHGKQVLDGNSNPYDVFLKDLEPPIVARFVRLIPVTDHSMNVCMRVELYGCVWLDGLVSYNAPAGQQFVLPGGSIIYLNDSVYDGAVGYSMTEGLGQLTDGVSGLDDFTQTHEYHVWPGYDYVGWRNESATNGFIEIMFEFDRIRNFTTMKVHCNNMFAKGVKIFKEVQCYFRSEASEWEPTAVYFPLVLDDVNPSARFVTVPLHHRMASAIKCQYHFADTWMMFSEITFQSDAAMYNNSGALPTSPMAPTTYDPMLKVDDSNTRILIGCLVAIIFILLAIIVIILWRQFWQKMLEKASRRMLDDEMTVSLSLPSESSMFNNNRSSSPSEQESNSTYDRIFPLRPDYQEPSRLIRKLPEFAPGEEESGCSGVVKPAQPNGPEGVPHYAEADIVNLQGVTGGNTYCVPAVTMDLLSGKDVAVEEFPRKLLAFKEKLGEGQFGEVHLCEVEGMEKFKDKDFALDVSANQPVLVAVKMLRADANKNARNDFLKEIKIMSRLKDPNIIRLLAVCITEDPLCMITEYMENGDLNQFLSRHEPLSSCSSDATVSYANLKFMATQIASGMKYLSSLNFVHRDLATRNCLVGKNYTIKIADFGMSRNLYSGDYYRIQGRAVLPIRWMSWESILLGKFTTASDVWAFGVTLWETFTFCQEQPYSQLSDEQVIENTGEFFRDQGRQIYLPQPALCPDSVYKLMLSCWRRETKHRPSFQEIHLLLLQQGAE.

A signal peptide spans M1–A21. Over K22–R399 the chain is Extracellular. The F5/8 type C domain maps to C30–C185. Intrachain disulfides connect C30–C185 and C73–C177. N121, N213, N261, N280, and N372 each carry an N-linked (GlcNAc...) asparagine glycan. A helical membrane pass occupies residues I400 to W421. Topologically, residues R422 to E854 are cytoplasmic. The tract at residues S452 to Y471 is disordered. Positions N455–S469 are enriched in low complexity. Y471 is subject to Phosphotyrosine; by SRC and autocatalysis. One can recognise a Protein kinase domain in the interval L563–L848. ATP contacts are provided by residues L569–V577 and K608. D709 functions as the Proton acceptor in the catalytic mechanism. Y735, Y739, and Y740 each carry phosphotyrosine; by SRC and autocatalysis.

This sequence belongs to the protein kinase superfamily. Tyr protein kinase family. Insulin receptor subfamily. As to quaternary structure, binds hydroxyproline-rich sequence motifs in fibrillar, glycosylated collagen, such as the GQOGVMGFO motif, where O stands for hydroxyproline. Interacts with SRC. Interacts (tyrosine phosphorylated) with SHC1. In terms of processing, N-glycosylated. Post-translationally, tyrosine phosphorylated in response to collagen binding. Phosphorylated by SRC; this is required for activation and subsequent autophosphorylation on additional tyrosine residues. In terms of tissue distribution, widely expressed. Detected in lung, ovary, skin and in testis Leydig cells (at protein level). Widely expressed. Detected at high levels in heart, lung, skeletal muscle, central nervous system (CNS) and kidney, and at lower levels in brain and testis. Detected in chondrocytes in tibia growth plates of young mice.

Its subcellular location is the cell membrane. It carries out the reaction L-tyrosyl-[protein] + ATP = O-phospho-L-tyrosyl-[protein] + ADP + H(+). Its activity is regulated as follows. Present in an inactive state in the absence of collagen binding and phosphorylation by SRC. Tyrosine phosphorylation enhances the affinity for ATP and the catalytic activity. Its function is as follows. Tyrosine kinase that functions as a cell surface receptor for fibrillar collagen and regulates cell differentiation, remodeling of the extracellular matrix, cell migration and cell proliferation. Required for normal bone development. Regulates osteoblast differentiation and chondrocyte maturation via a signaling pathway that involves MAP kinases and leads to the activation of the transcription factor RUNX2. Regulates remodeling of the extracellular matrix by up-regulation of the collagenases MMP1, MMP2 and MMP13, and thereby facilitates cell migration and tumor cell invasion. Promotes fibroblast migration and proliferation, and thereby contributes to cutaneous wound healing. The polypeptide is Discoidin domain-containing receptor 2 (Ddr2) (Mus musculus (Mouse)).